The sequence spans 341 residues: tRNA N6-adenosine threonylcarbamoyltransferase (341 aa).

The Fe cation site is built by His-115 and His-119. Residues 137–141 (IVSGG), Asp-170, Gly-183, Asp-187, and Asn-276 each bind substrate. Asp-304 is a Fe cation binding site.

The protein belongs to the KAE1 / TsaD family. It depends on Fe(2+) as a cofactor.

The protein localises to the cytoplasm. The enzyme catalyses L-threonylcarbamoyladenylate + adenosine(37) in tRNA = N(6)-L-threonylcarbamoyladenosine(37) in tRNA + AMP + H(+). In terms of biological role, required for the formation of a threonylcarbamoyl group on adenosine at position 37 (t(6)A37) in tRNAs that read codons beginning with adenine. Is involved in the transfer of the threonylcarbamoyl moiety of threonylcarbamoyl-AMP (TC-AMP) to the N6 group of A37, together with TsaE and TsaB. TsaD likely plays a direct catalytic role in this reaction. The chain is tRNA N6-adenosine threonylcarbamoyltransferase from Staphylococcus aureus (strain JH1).